The following is a 236-amino-acid chain: Phosphoribosylaminoimidazole-succinocarboxamide synthase (236 aa).

It belongs to the SAICAR synthetase family.

The catalysed reaction is 5-amino-1-(5-phospho-D-ribosyl)imidazole-4-carboxylate + L-aspartate + ATP = (2S)-2-[5-amino-1-(5-phospho-beta-D-ribosyl)imidazole-4-carboxamido]succinate + ADP + phosphate + 2 H(+). It participates in purine metabolism; IMP biosynthesis via de novo pathway; 5-amino-1-(5-phospho-D-ribosyl)imidazole-4-carboxamide from 5-amino-1-(5-phospho-D-ribosyl)imidazole-4-carboxylate: step 1/2. The polypeptide is Phosphoribosylaminoimidazole-succinocarboxamide synthase (Rickettsia africae (strain ESF-5)).